The chain runs to 175 residues: Bacterial proteasome activator (175 aa).

Positions 152–175 are disordered; sequence LPPGIQVPGAQRGGATHPGTGQYL. The short motif at 173 to 175 is the HbYX motif element; that stretch reads QYL.

Belongs to the Bpa family. In terms of assembly, forms a homooligomeric, either hexameric or heptameric, ring-like structure which stacks co-axially with the proteasomal alpha-rings.

Its function is as follows. Interacts with the core proteasome alpha-subunit (PrcA) through its C-terminal hydrophobic-tyrosine-X motif (HbYX motif). Interaction of Bpa with the proteasome stimulates proteasomal peptidase and casein degradation activity, which suggests Bpa could play a role in the removal of non-native or damaged proteins by influencing the conformation of the proteasome complex upon interaction. The chain is Bacterial proteasome activator from Mycolicibacterium smegmatis (strain ATCC 700084 / mc(2)155) (Mycobacterium smegmatis).